Here is a 1218-residue protein sequence, read N- to C-terminus: NACHT, LRR and PYD domains-containing protein 1a allele 1 (1218 aa).

The interval 1 to 61 (MEESQSKQES…SLPGWSSTSN (61 aa)) is disordered. Residues 7–29 (KQESNTRVAQHGSQQDVDPTFQT) are compositionally biased toward polar residues. In terms of domain architecture, NACHT spans 175 to 484 (QLVIIEGAAG…EFFAAMSYIL (310 aa)). ATP is bound at residue 181 to 188 (GAAGIGKS). 3 LRR repeats span residues 343-364 (KERN…LTLC), 673-693 (NLEE…RSLC), and 730-750 (RLAE…RQLC). Residues 799-815 (TMPTENTDGEESLTSSK) show a composition bias toward polar residues. The tract at residues 799–842 (TMPTENTDGEESLTSSKQQQQQSGDKHMEPLGTDDDFWGPSGPV) is disordered. A ZU5 region spans residues 835-968 (FWGPSGPVST…HFAVLENPSF (134 aa)). Residues 835–1118 (FWGPSGPVST…LRPALPRMAS (284 aa)) form the FIIND domain. Residues 969–1118 (SPMGVLLRMI…LRPALPRMAS (150 aa)) are UPA. The region spanning 1122–1211 (DAPALLHFVD…HLIMDLLEKS (90 aa)) is the CARD domain.

This sequence belongs to the NLRP family. Interacts (via LRR repeats) with BCL2 and BCL2L1 (via the loop between motifs BH4 and BH3). Interacts with NOD2; this interaction is enhanced in the presence of muramyl dipeptide (MDP) and increases IL1B release. Interacts with EIF2AK2/PKR; this interaction requires EIF2AK2 activity, is accompanied by EIF2AK2 autophosphorylation and promotes inflammasome assembly in response to danger-associated signals. Interacts with MEFV; this interaction targets Nlrp1a to degradation by autophagy, hence preventing excessive IL1B- and IL18-mediated inflammation. Interacts with DPP9; leading to inhibit activation of the inflammasome. DPP9 acts via formation of a ternary complex, composed of a DPP9 homodimer, one full-length NLRP1 protein, and one cleaved C-terminus of Nlrp1a (NACHT, LRR and PYD domains-containing protein 1a, C-terminus). Interacts with DPP8; leading to inhibit activation of the inflammasome, probably via formation of a ternary complex with DPP8. In terms of assembly, interacts with the C-terminal part of Nlrp1a (NACHT, LRR and PYD domains-containing protein 1a, C-terminus) in absence of pathogens and other damage-associated signals. As to quaternary structure, interacts with the N-terminal part of Nlrp1a (NACHT, LRR and PYD domains-containing protein 1a, N-terminus) in absence of pathogens and other damage-associated signals. Homomultimer; forms the Nlrp1a inflammasome polymeric complex, a filament composed of homopolymers of this form in response to pathogens and other damage-associated signals. The Nlrp1a inflammasome polymeric complex directly recruits pro-caspase-1 (proCASP1) independently of PYCARD/ASC. Interacts (via CARD domain) with CASP1 (via CARD domain); leading to CASP1 activation. Autocatalytically cleaved. Autocatalytic cleavage in FIIND region occurs constitutively, prior to activation signals, and is required for inflammasome activity (IL1B release), possibly by facilitating CASP1 binding. Both N- and C-terminal parts remain associated non-covalently. Post-translationally, (Microbial infection) Cleavage by B.anthracis lethal toxin (LT) endopeptidase promotes ubiquitination and degradation of the N-terminal part, releasing the cleaved C-terminal part of the protein (NACHT, LRR and PYD domains-containing protein 1a, C-terminus), which polymerizes and forms the Nlrp1a inflammasome. In terms of processing, ubiquitinated in response to pathogen-associated signals, leading to its degradation by the proteasome and subsequent release of the cleaved C-terminal part of the protein (NACHT, LRR and PYD domains-containing protein 1a, C-terminus), which polymerizes and forms the Nlrp1a inflammasome.

It is found in the cytoplasm. It localises to the cytosol. The protein resides in the nucleus. The protein localises to the inflammasome. With respect to regulation, activated by cleavage by B.anthracis lethal toxin (LT) endopeptidase. Cleavage by LT promotes ubiquitination and degradation of the N-terminal part, releasing the cleaved C-terminal part of the protein (NACHT, LRR and PYD domains-containing protein 1a, C-terminus), which polymerizes and forms the Nlrp1a inflammasome. Nlrp1a inflammasome is inhibited by DPP8 and DPP9, which sequester the C-terminal fragment of Nlrp1a (NACHT, LRR and PYD domains-containing protein 1a, C-terminus) in a ternary complex, thereby preventing Nlrp1a oligomerization and activation. Nlrp1a inflammasome is weakly activated by Val-boroPro (Talabostat, PT-100), an inhibitor of dipeptidyl peptidases DPP8 and DPP9. Val-boroPro relieves inhibition of DPP8 and/or DPP9 by promoting disruption of the ternary complex, releasing its C-terminal part from autoinhibition. Weakly activated by Toxoplasma gondii. In terms of biological role, acts as the sensor component of the Nlrp1a inflammasome, which mediates inflammasome activation in response to various pathogen-associated signals, leading to subsequent pyroptosis. Inflammasomes are supramolecular complexes that assemble in the cytosol in response to pathogens and other damage-associated signals and play critical roles in innate immunity and inflammation. Acts as a recognition receptor (PRR): recognizes specific pathogens and other damage-associated signals, such as B.anthracis lethal toxin (LT) or Val-boroPro inhibitor, and mediates the formation of the inflammasome polymeric complex. In response to pathogen-associated signals, the N-terminal part of Nlrp1a is degraded by the proteasome, releasing the cleaved C-terminal part of the protein (NACHT, LRR and PYD domains-containing protein 1a, C-terminus), which polymerizes to initiate the formation of the inflammasome complex: the inflammasome directly recruits pro-caspase-1 (proCASP1) independently of PYCARD/ASC and promotes caspase-1 (CASP1) activation, which subsequently cleaves and activates inflammatory cytokines IL1B and IL18 and gasdermin-D (GSDMD), leading to pyroptosis. In the absence of GSDMD expression, the Nlrp1a inflammasome is able to recruit and activate CASP8, leading to activation of gasdermin-E (GSDME). Its function is as follows. Constitutes the precursor of the Nlrp1a inflammasome, which mediates autoproteolytic processing within the FIIND domain to generate the N-terminal and C-terminal parts, which are associated non-covalently in absence of pathogens and other damage-associated signals. Regulatory part that prevents formation of the Nlrp1a inflammasome: in absence of pathogens and other damage-associated signals, interacts with the C-terminal part of Nlrp1a (NACHT, LRR and PYD domains-containing protein 1a, C-terminus), preventing activation of the Nlrp1a inflammasome. In response to pathogen-associated signals, this part is ubiquitinated by the N-end rule pathway and degraded by the proteasome, releasing the cleaved C-terminal part of the protein, which polymerizes and forms the Nlrp1a inflammasome. Functionally, constitutes the active part of the Nlrp1a inflammasome. In absence of pathogens and other damage-associated signals, interacts with the N-terminal part of Nlrp1a (NACHT, LRR and PYD domains-containing protein 1a, N-terminus), preventing activation of the Nlrp1a inflammasome. In response to pathogen-associated signals, the N-terminal part of Nlrp1a is degraded by the proteasome, releasing this form, which polymerizes to form the Nlrp1a inflammasome complex: the Nlrp1a inflammasome complex then directly recruits pro-caspase-1 (proCASP1) and promotes caspase-1 (CASP1) activation, leading to gasdermin-D (GSDMD) cleavage and subsequent pyroptosis. The protein is NACHT, LRR and PYD domains-containing protein 1a allele 1 of Rattus norvegicus (Rat).